Here is a 480-residue protein sequence, read N- to C-terminus: Cyclin L homolog cyl-1 (480 aa).

Residues Pro-25 to Ser-58 form a disordered region. Residues Glu-33–Ser-44 are compositionally biased toward basic and acidic residues. A compositionally biased stretch (polar residues) spans Thr-45–Ser-58. The Cyclin N-terminal domain occupies Pro-91–Val-230. Residues Lys-368–Arg-480 are disordered. Basic and acidic residues-rich tracts occupy residues Lys-384 to Glu-409 and Asn-418 to Lys-442. Positions Asp-443–Arg-453 are enriched in basic residues. Residues Asp-454–Ser-472 are compositionally biased toward basic and acidic residues.

The protein belongs to the cyclin family.

Functionally, involved in pre-mRNA splicing. Functions in association with cyclin-dependent kinases (CDKs). Involved in induction of expression of heat shock protein hsp-16.2 in response to heat shock. Plays a role in male tail development, perhaps acting together with cell cycle regulators cdc-25.2, cdk-1, cyb-3, and cyd-1. In Caenorhabditis elegans, this protein is Cyclin L homolog cyl-1.